Here is a 124-residue protein sequence, read N- to C-terminus: Small ribosomal subunit protein uS12 (124 aa).

Residues 1-24 form a disordered region; the sequence is MPTINQLVRQGRKKSVKKTNTPAL. D89 is modified (3-methylthioaspartic acid).

It belongs to the universal ribosomal protein uS12 family. Part of the 30S ribosomal subunit. Contacts proteins S8 and S17. May interact with IF1 in the 30S initiation complex.

Functionally, with S4 and S5 plays an important role in translational accuracy. Its function is as follows. Interacts with and stabilizes bases of the 16S rRNA that are involved in tRNA selection in the A site and with the mRNA backbone. Located at the interface of the 30S and 50S subunits, it traverses the body of the 30S subunit contacting proteins on the other side and probably holding the rRNA structure together. The combined cluster of proteins S8, S12 and S17 appears to hold together the shoulder and platform of the 30S subunit. The polypeptide is Small ribosomal subunit protein uS12 (Desulfotalea psychrophila (strain LSv54 / DSM 12343)).